The primary structure comprises 272 residues: Ribonuclease HII (272 aa).

Residues 87–272 (KYVAGVDEVG…HRMSFLKNIL (186 aa)) form the RNase H type-2 domain. The a divalent metal cation site is built by Asp-93, Glu-94, and Asp-188.

This sequence belongs to the RNase HII family. Mn(2+) serves as cofactor. The cofactor is Mg(2+).

It localises to the cytoplasm. The enzyme catalyses Endonucleolytic cleavage to 5'-phosphomonoester.. Functionally, endonuclease that specifically degrades the RNA of RNA-DNA hybrids. The chain is Ribonuclease HII from Clostridium perfringens (strain SM101 / Type A).